The following is a 94-amino-acid chain: Ribonuclease P protein component 1 (94 aa).

It belongs to the eukaryotic/archaeal RNase P protein component 1 family. As to quaternary structure, consists of a catalytic RNA component and at least 4-5 protein subunits.

The protein localises to the cytoplasm. The enzyme catalyses Endonucleolytic cleavage of RNA, removing 5'-extranucleotides from tRNA precursor.. In terms of biological role, part of ribonuclease P, a protein complex that generates mature tRNA molecules by cleaving their 5'-ends. In Thermofilum pendens (strain DSM 2475 / Hrk 5), this protein is Ribonuclease P protein component 1.